Here is a 473-residue protein sequence, read N- to C-terminus: MSSSVPNSDRKIVTGPAGYILEDVPHFSDDFPDHPTYPNPLQDNAAYSVVKQYFVDEDDTVPQKIVVHPDSPRGTHFRRAGPRQRVYFESDDVLACIVTCGGLCPGLNTVIREIVCGLSYMYGVKRILGIDGGYRGFYARNTIHLDLKTVNDIHRSGGTILGTSRGGHNTTKIVDSIQDRGINQVYIIGGDGSQKGAAAIFEEIRKRKLKVAVAGIPKTIDNDIPIIDRSFGFDTAVEEAQRAINAAHVEATSFENGIGLVKLMGRYSGFIAMHATLASRDVDCCLIPESPFFLEGSGGLFEFIDKRLKESGHMVIVIAEGAGQDLLSESMKESTTLKDASGNKLLQDIGLWISQRIKDHFAKKMTLTLKYIDPTYMIRAVPSNASDNVCCTLLAQSAVHGVMAGYNGFTVGLVNGRHTYIPFNRITEKQNKVVITDRMWARLLSSTNQPSFMKQADKIHSNQLVGEPGTMKW.

At S71 the chain carries Phosphoserine. ATP-binding positions include G102, 165 to 166, and 190 to 193; these read RG and GDGS. D191 serves as a coordination point for Mg(2+). Substrate-binding positions include 219–221, 264–266, E320, and 376–379; these read TID, MGR, and YMIR. The active-site Proton acceptor is the D221.

Belongs to the phosphofructokinase type A (PFKA) family. PPi-dependent PFK group II subfamily. Atypical ATP-dependent clade 'X' sub-subfamily. Homotetramer. Requires Mg(2+) as cofactor. Expressed in roots, leaves, stems and flowers.

Its subcellular location is the cytoplasm. The catalysed reaction is beta-D-fructose 6-phosphate + ATP = beta-D-fructose 1,6-bisphosphate + ADP + H(+). Its pathway is carbohydrate degradation; glycolysis; D-glyceraldehyde 3-phosphate and glycerone phosphate from D-glucose: step 3/4. Allosterically activated by AMP. Catalyzes the phosphorylation of D-fructose 6-phosphate to fructose 1,6-bisphosphate by ATP, the first committing step of glycolysis. The protein is ATP-dependent 6-phosphofructokinase 1 of Arabidopsis thaliana (Mouse-ear cress).